Here is a 139-residue protein sequence, read N- to C-terminus: Large ribosomal subunit protein uL22 (139 aa).

The interval 1 to 22 (MVSENEKTRRPKRSIQHRQNKD) is disordered. Residues 9 to 18 (RRPKRSIQHR) are compositionally biased toward basic residues.

The protein belongs to the universal ribosomal protein uL22 family. Part of the 50S ribosomal subunit.

Functionally, this protein binds specifically to 23S rRNA; its binding is stimulated by other ribosomal proteins, e.g. L4, L17, and L20. It is important during the early stages of 50S assembly. It makes multiple contacts with different domains of the 23S rRNA in the assembled 50S subunit and ribosome. Its function is as follows. The globular domain of the protein is located near the polypeptide exit tunnel on the outside of the subunit, while an extended beta-hairpin is found that lines the wall of the exit tunnel in the center of the 70S ribosome. In Pseudothermotoga lettingae (strain ATCC BAA-301 / DSM 14385 / NBRC 107922 / TMO) (Thermotoga lettingae), this protein is Large ribosomal subunit protein uL22.